Consider the following 260-residue polypeptide: Potassium inward rectifier (Kir)-like channel 3 (260 aa).

The disordered stretch occupies residues 1–34 (MPMTPSEFKNRLLFGSLPRSSSDPTDLQFTEPNV). Residues 1-68 (MPMTPSEFKN…EQSVSKSIAR (68 aa)) lie on the Cytoplasmic side of the membrane. The span at 18-31 (PRSSSDPTDLQFTE) shows a compositional bias: polar residues. Residues 69-89 (QALALLVVYLSLGVLIYWLTL) form a helical membrane-spanning segment. Residues 127–146 (DSFCFSVMMVTTVGFGDRAF) constitute an intramembrane region (pore-forming). Residues 153 to 173 (FLAAVWLLVSTLAVARAFLFL) traverse the membrane as a helical segment. The Cytoplasmic segment spans residues 174-260 (ADARADKRNR…LVDLTTATSV (87 aa)). EF-hand domains lie at 190 to 225 (LGES…QMEK) and 229 to 256 (EDFI…DLTT). Residues aspartate 203, aspartate 205, aspartate 207, arginine 209, glutamate 214, aspartate 242, serine 246, arginine 248, and aspartate 253 each coordinate Ca(2+).

It belongs to the two pore domain potassium channel (TC 1.A.1.7) family. As to quaternary structure, homotetramer. Expressed in hydathodes and the vascular tissues of roots, stems, leaves and flowers.

Its subcellular location is the vacuole membrane. Functionally, probable calcium-activated potassium channel. The polypeptide is Potassium inward rectifier (Kir)-like channel 3 (KCO3) (Arabidopsis thaliana (Mouse-ear cress)).